The chain runs to 724 residues: DNA ligase (724 aa).

NAD(+) is bound by residues 44–48, 93–94, and glutamate 127; these read DADYD and SL. The N6-AMP-lysine intermediate role is filled by lysine 129. NAD(+) is bound by residues arginine 150, glutamate 186, lysine 307, and lysine 331. Zn(2+)-binding residues include cysteine 437, cysteine 440, cysteine 461, and cysteine 467. Residues 646 to 724 form the BRCT domain; that stretch reads TEGSPVAGKT…EDEWLALIGG (79 aa).

Belongs to the NAD-dependent DNA ligase family. LigA subfamily. Mg(2+) is required as a cofactor. It depends on Mn(2+) as a cofactor.

It catalyses the reaction NAD(+) + (deoxyribonucleotide)n-3'-hydroxyl + 5'-phospho-(deoxyribonucleotide)m = (deoxyribonucleotide)n+m + AMP + beta-nicotinamide D-nucleotide.. Its function is as follows. DNA ligase that catalyzes the formation of phosphodiester linkages between 5'-phosphoryl and 3'-hydroxyl groups in double-stranded DNA using NAD as a coenzyme and as the energy source for the reaction. It is essential for DNA replication and repair of damaged DNA. The chain is DNA ligase from Agrobacterium fabrum (strain C58 / ATCC 33970) (Agrobacterium tumefaciens (strain C58)).